Reading from the N-terminus, the 454-residue chain is Histidine--tRNA ligase (454 aa).

This sequence belongs to the class-II aminoacyl-tRNA synthetase family. Homodimer.

It localises to the cytoplasm. It carries out the reaction tRNA(His) + L-histidine + ATP = L-histidyl-tRNA(His) + AMP + diphosphate + H(+). This chain is Histidine--tRNA ligase, found in Bacteroides fragilis (strain ATCC 25285 / DSM 2151 / CCUG 4856 / JCM 11019 / LMG 10263 / NCTC 9343 / Onslow / VPI 2553 / EN-2).